The sequence spans 346 residues: Centromere protein L (346 aa).

Ser41 bears the Phosphoserine mark. Thr45 is modified (phosphothreonine). Phosphoserine is present on Ser55.

This sequence belongs to the CENP-L/IML3 family. In terms of assembly, component of the CENPA-CAD complex, composed of CENPI, CENPK, CENPL, CENPO, CENPP, CENPQ, CENPR and CENPS. The CENPA-CAD complex interacts with the CENPA-NAC complex, at least composed of CENPA, CENPC, CENPH, CENPM, CENPN, CENPT and CENPU.

It localises to the nucleus. The protein resides in the chromosome. The protein localises to the centromere. Its function is as follows. Component of the CENPA-CAD (nucleosome distal) complex, a complex recruited to centromeres which is involved in assembly of kinetochore proteins, mitotic progression and chromosome segregation. May be involved in incorporation of newly synthesized CENPA into centromeres via its interaction with the CENPA-NAC complex. This is Centromere protein L (CENPL) from Bos taurus (Bovine).